A 219-amino-acid polypeptide reads, in one-letter code: Phosphatidylserine decarboxylase proenzyme (219 aa).

Residue serine 182 is the Schiff-base intermediate with substrate; via pyruvic acid of the active site. Serine 182 is subject to Pyruvic acid (Ser); by autocatalysis.

This sequence belongs to the phosphatidylserine decarboxylase family. PSD-A subfamily. Heterodimer of a large membrane-associated beta subunit and a small pyruvoyl-containing alpha subunit. Requires pyruvate as cofactor. In terms of processing, is synthesized initially as an inactive proenzyme. Formation of the active enzyme involves a self-maturation process in which the active site pyruvoyl group is generated from an internal serine residue via an autocatalytic post-translational modification. Two non-identical subunits are generated from the proenzyme in this reaction, and the pyruvate is formed at the N-terminus of the alpha chain, which is derived from the carboxyl end of the proenzyme. The post-translation cleavage follows an unusual pathway, termed non-hydrolytic serinolysis, in which the side chain hydroxyl group of the serine supplies its oxygen atom to form the C-terminus of the beta chain, while the remainder of the serine residue undergoes an oxidative deamination to produce ammonia and the pyruvoyl prosthetic group on the alpha chain.

It is found in the cell membrane. The catalysed reaction is a 1,2-diacyl-sn-glycero-3-phospho-L-serine + H(+) = a 1,2-diacyl-sn-glycero-3-phosphoethanolamine + CO2. The protein operates within phospholipid metabolism; phosphatidylethanolamine biosynthesis; phosphatidylethanolamine from CDP-diacylglycerol: step 2/2. Its function is as follows. Catalyzes the formation of phosphatidylethanolamine (PtdEtn) from phosphatidylserine (PtdSer). In Chlorobium phaeovibrioides (strain DSM 265 / 1930) (Prosthecochloris vibrioformis (strain DSM 265)), this protein is Phosphatidylserine decarboxylase proenzyme.